The sequence spans 232 residues: MTEPAQKKQKQTVQERKAFISRITNETKIQIAISLNGGYIQIKDSILPAKKDDDVASQATQSQVIDIHTGVGFLDHMIHALAKHSGWSLIVECIGDLHIDDHHTTEDCGIALGQAFKEAMGAVRGVKRFGTGFAPLDEALSRAVVDLSNRPFAVIDLGLKREMIGDLSTEMIPHFLESFAEAARITLHVDCLRGFNDHHRSESAFKALAVAIREAISSNGTNDVPSTKGVLM.

Belongs to the imidazoleglycerol-phosphate dehydratase family.

The catalysed reaction is D-erythro-1-(imidazol-4-yl)glycerol 3-phosphate = 3-(imidazol-4-yl)-2-oxopropyl phosphate + H2O. It functions in the pathway amino-acid biosynthesis; L-histidine biosynthesis; L-histidine from 5-phospho-alpha-D-ribose 1-diphosphate: step 6/9. The sequence is that of Imidazoleglycerol-phosphate dehydratase (HIS3) from Lachancea kluyveri (strain ATCC 58438 / CBS 3082 / BCRC 21498 / NBRC 1685 / JCM 7257 / NCYC 543 / NRRL Y-12651) (Yeast).